A 1603-amino-acid chain; its full sequence is DNA polymerase theta (1603 aa).

One can recognise a Helicase ATP-binding domain in the interval 38-208; it reads EARQFEDQHL…WLDGAKVFEA (171 aa). Residue 51–58 coordinates ATP; the sequence is APTSAGKS. The DEAH box motif lies at 149-152; it reads DEMH. Residues 283–434 form the Helicase C-terminal domain; that stretch reads TDSSLLEILK…GVLTRKRDAE (152 aa).

Belongs to the DNA polymerase type-A family.

It is found in the nucleus. The catalysed reaction is DNA(n) + a 2'-deoxyribonucleoside 5'-triphosphate = DNA(n+1) + diphosphate. Its function is as follows. DNA polymerase that promotes microhomology-mediated end-joining (MMEJ), an alternative non-homologous end-joining (NHEJ) machinery triggered in response to double-strand breaks in DNA. MMEJ is an error-prone repair pathway that produces deletions of sequences from the strand being repaired and promotes genomic rearrangements, such as telomere fusions. Required to prevent extensive loss of sequences near G-quadruplex (G4) DNA sites, which are prone to cause genome alterations, by generating deletions. This chain is DNA polymerase theta, found in Caenorhabditis elegans.